The chain runs to 413 residues: Calmodulin-binding protein CmbB (413 aa).

FNIP repeat units lie at residues 104–148 (FNHP…LSDC), 149–192 (YNQA…LGKG), 222–257 (SLPPNLEFLLLSDAFNHPIEAGMLPPKLKTLTFGDG), 258–301 (FNQP…FHQF), 304–343 (FSQTFENIPSHVQTVEFGYTYNKPITSLPSHLKYIKFSEK), and 344–386 (YNHP…LNGY).

As to quaternary structure, interacts with calmodulin in the presence of Ca(2+).

This chain is Calmodulin-binding protein CmbB, found in Dictyostelium discoideum (Social amoeba).